A 462-amino-acid chain; its full sequence is Kinetochore protein nsk1 (462 aa).

Polar residues predominate over residues 104–120 (PSKNHETSLSPSKSTID). 3 disordered regions span residues 104–161 (PSKN…CPGI), 180–240 (EKYG…PLRT), and 320–462 (NQLF…NIQS). Basic and acidic residues predominate over residues 121 to 138 (NNERKLDNEIDNYKHDVK). Residues 146–156 (GKTSNPSQGTT) show a composition bias toward polar residues. Residues 180 to 189 (EKYGKTDLGK) are compositionally biased toward basic and acidic residues. The span at 229–240 (KNRSSTFSPLRT) shows a compositional bias: polar residues. Residues 324–333 (KSEEEKDPVG) show a composition bias toward basic and acidic residues. Positions 422-444 (WPQNLAKNNINSEPNTPTKSNID) are enriched in polar residues. Residues 449–462 (HSARAHKTRKNIQS) are compositionally biased toward basic residues.

As to quaternary structure, interacts with dlc1. The dlc1-nsk1 complex seems to oligomerize in chain-like structures. Also binds directly to spindle microtubules. In terms of processing, phosphorylated by cdk1 at prometaphase arrest. Phosphorylation prevents nsk1 kinetochore and spindle targeting. Dephosphorylated by clp1 at anaphase onset controls its relocalization.

The protein resides in the nucleus. It localises to the nucleolus. The protein localises to the cytoplasm. It is found in the cytoskeleton. Its subcellular location is the spindle. The protein resides in the chromosome. It localises to the centromere. The protein localises to the kinetochore. Ensures chromosome alignment and accurate chromosome segregation during mitosis. Promotes proper kinetochore-microtubule (k-MT) interactions during anaphase B. The phosphorylation status of nsk1 affects the proper k-MT coupling, ensuring that it interacts stably only at the correct time during mitosis. This chain is Kinetochore protein nsk1 (nsk1), found in Schizosaccharomyces pombe (strain 972 / ATCC 24843) (Fission yeast).